Here is a 1505-residue protein sequence, read N- to C-terminus: Homeobox protein cut-like 1 (1505 aa).

A coiled-coil region spans residues 56–407 (LLKSFQGEID…ALRISNSDLS (352 aa)). 2 stretches are compositionally biased toward polar residues: residues 396–407 (NAALRISNSDLS) and 440–451 (EQASNTNGTHQF). Disordered regions lie at residues 396–455 (NAAL…SPAG), 512–552 (YSTN…EEMD), 646–669 (PKRR…GSDE), and 682–704 (LQVQ…NSDD). A compositionally biased stretch (low complexity) spans 516 to 546 (SISSQSPLQQSPDVNGMAPSPSQSESAGSVS). E540 carries the post-translational modification Phosphoserine. A DNA-binding region (CUT 1) is located at residues 542–629 (AGSVSEGEEM…ILALRSIQGR (88 aa)). Over residues 694 to 703 (SSASGSGNSD) the composition is skewed to low complexity. S763 carries the post-translational modification Phosphoserine. The disordered stretch occupies residues 768–802 (SAAPEAGASALPNPPALKKEAQDAPGLDPQGAADC). Residues K785, K811, and K842 each participate in a glycyl lysine isopeptide (Lys-Gly) (interchain with G-Cter in SUMO2) cross-link. Residues 815–853 (GRSGAWKDHWWSAVQPERRNAASSEEAKAEETGGGKEKG) are compositionally biased toward basic and acidic residues. Positions 815–930 (GRSGAWKDHW…KPTKPSVPPL (116 aa)) are disordered. Polar residues-rich tracts occupy residues 868–877 (SQLQGPSSSE) and 887–911 (SPYS…NSPL). Residue S909 is modified to Phosphoserine. Positions 934-1021 (QYEVYMYQEV…QGVLPVQGQQ (88 aa)) form a DNA-binding region, CUT 2. Residues 1036 to 1049 (LQQGCVSSESTPKT) show a composition bias toward polar residues. A disordered region spans residues 1036–1110 (LQQGCVSSES…QPTTPLPLSG (75 aa)). The segment covering 1050–1066 (SASCSPAPESPMSSSES) has biased composition (low complexity). S1059 and S1069 each carry phosphoserine. Positions 1117–1204 (QELVAMSPEL…VEKLMDMKRM (88 aa)) form a DNA-binding region, CUT 3. Residues 1210-1247 (MKRRHSSVSDSQPCEPPSVGTEYSQGASPQPQHQLKKP) form a disordered region. Residues 1230-1242 (TEYSQGASPQPQH) are compositionally biased toward polar residues. Residues 1244–1303 (LKKPRVVLAPEEKEALKRAYQQKPYPSPKTIEDLATQLNLKTSTVINWFHNYRSRIRREL) constitute a DNA-binding region (homeobox). S1270 is subject to Phosphoserine. K1284 participates in a covalent cross-link: Glycyl lysine isopeptide (Lys-Gly) (interchain with G-Cter in SUMO2). Residues 1312 to 1480 (SQGQAGASDS…SRDNPLRKKK (169 aa)) form a disordered region. Residues 1316–1333 (AGASDSPSARSGRAAPSS) are compositionally biased toward low complexity. The residue at position 1337 (S1337) is a Phosphoserine. Composition is skewed to basic and acidic residues over residues 1353–1368 (EEPK…EVPR) and 1384–1394 (DDARDDDHEGG). 2 stretches are compositionally biased toward low complexity: residues 1405 to 1436 (PASA…AAPS) and 1443 to 1455 (NSSS…RPSS). S1455 carries the phosphoserine modification. A compositionally biased stretch (basic and acidic residues) spans 1467 to 1476 (GARDSRDNPL). 2 positions are modified to phosphoserine: S1486 and S1496.

This sequence belongs to the CUT homeobox family. In terms of assembly, interacts with BANP. Interacts with SATB1 (via DNA-binding domains); the interaction inhibits the attachment of both proteins to DNA. In terms of processing, phosphorylated by PKA. As cells progress into S phase, a fraction of CUX1 molecules is proteolytically processed into N-terminally truncated proteins of 110 kDa by CTSL. Cell cycle-dependent processing of CUX1 serves to generate a CDP/Cux p110 with distinct DNA binding and transcriptional properties.

Its subcellular location is the nucleus. Its function is as follows. Transcription factor involved in the control of neuronal differentiation in the brain. Regulates dendrite development and branching, and dendritic spine formation in cortical layers II-III. Also involved in the control of synaptogenesis. In addition, it has probably a broad role in mammalian development as a repressor of developmentally regulated gene expression. May act by preventing binding of positively-activing CCAAT factors to promoters. Component of nf-munr repressor; binds to the matrix attachment regions (MARs) (5' and 3') of the immunoglobulin heavy chain enhancer. Represses T-cell receptor (TCR) beta enhancer function by binding to MARbeta, an ATC-rich DNA sequence located upstream of the TCR beta enhancer. Binds to the TH enhancer; may require the basic helix-loop-helix protein TCF4 as a coactivator. In terms of biological role, plays a role in cell cycle progression, in particular at the G1/S transition. As cells progress into S phase, a fraction of CUX1 molecules is proteolytically processed into N-terminally truncated proteins of 110 kDa. While CUX1 only transiently binds to DNA and carries the CCAAT-displacement activity, CDP/Cux p110 makes a stable interaction with DNA and stimulates expression of genes such as POLA1. The sequence is that of Homeobox protein cut-like 1 from Homo sapiens (Human).